The primary structure comprises 152 residues: MATELVVQSERAFQKQPHIFQNAKKGAGRRWYKDVGLGFKTPAEAIYGEYVDKKCPFVGQVSIRGRILTGTVVSTKMHRTIIIRREYLHFIPKYNRYEKRHKNLAAHVSPAFRINEGDVVTVGQCRPLSKTVRFNVLRVVKHTEGPKQFGKF.

Belongs to the universal ribosomal protein uS17 family. In terms of assembly, component of the small ribosomal subunit (SSU). Mature yeast ribosomes consist of a small (40S) and a large (60S) subunit. The 40S small subunit contains 1 molecule of ribosomal RNA (18S rRNA) and at least 33 different proteins. The large 60S subunit contains 3 rRNA molecules (25S, 5.8S and 5S rRNA) and at least 46 different proteins.

The protein localises to the cytoplasm. It is found in the nucleus. Component of the ribosome, a large ribonucleoprotein complex responsible for the synthesis of proteins in the cell. The small ribosomal subunit (SSU) binds messenger RNAs (mRNAs) and translates the encoded message by selecting cognate aminoacyl-transfer RNA (tRNA) molecules. The large subunit (LSU) contains the ribosomal catalytic site termed the peptidyl transferase center (PTC), which catalyzes the formation of peptide bonds, thereby polymerizing the amino acids delivered by tRNAs into a polypeptide chain. The nascent polypeptides leave the ribosome through a tunnel in the LSU and interact with protein factors that function in enzymatic processing, targeting, and the membrane insertion of nascent chains at the exit of the ribosomal tunnel. The polypeptide is Small ribosomal subunit protein uS17A (rps1101) (Schizosaccharomyces pombe (strain 972 / ATCC 24843) (Fission yeast)).